We begin with the raw amino-acid sequence, 1056 residues long: Carbamoyl phosphate synthase large chain (1056 aa).

Positions 1–397 are carboxyphosphate synthetic domain; it reads MPRRTDIKKV…GFKKALRSID (397 aa). Positions 127, 167, 173, 174, 206, 208, 213, 239, 240, 241, 282, and 294 each coordinate ATP. One can recognise an ATP-grasp 1 domain in the interval 131–323; that stretch reads KALMQKIGEP…IARVAAKIAI (193 aa). Q282, E294, and N296 together coordinate Mg(2+). 3 residues coordinate Mn(2+): Q282, E294, and N296. The interval 398–530 is oligomerization domain; it reads TDINTHTNHN…YSTHGVTTDI (133 aa). Residues 531-919 are carbamoyl phosphate synthetic domain; that stretch reads IQNDKKKVLI…YKACISADNE (389 aa). The region spanning 661 to 852 is the ATP-grasp 2 domain; sequence SELLDALKIP…LAKVAAKVMI (192 aa). The ATP site is built by R697, S736, L738, E743, G768, V769, H770, S771, Q811, and E823. The Mg(2+) site is built by Q811, E823, and N825. The Mn(2+) site is built by Q811, E823, and N825. Positions 918–1056 constitute an MGS-like domain; the sequence is NELPIEGNVF…PISHYLSEVE (139 aa). Positions 920-1056 are allosteric domain; the sequence is LPIEGNVFIS…PISHYLSEVE (137 aa).

It belongs to the CarB family. Composed of two chains; the small (or glutamine) chain promotes the hydrolysis of glutamine to ammonia, which is used by the large (or ammonia) chain to synthesize carbamoyl phosphate. Tetramer of heterodimers (alpha,beta)4. Requires Mg(2+) as cofactor. Mn(2+) serves as cofactor.

The enzyme catalyses hydrogencarbonate + L-glutamine + 2 ATP + H2O = carbamoyl phosphate + L-glutamate + 2 ADP + phosphate + 2 H(+). The catalysed reaction is hydrogencarbonate + NH4(+) + 2 ATP = carbamoyl phosphate + 2 ADP + phosphate + 2 H(+). It participates in amino-acid biosynthesis; L-arginine biosynthesis; carbamoyl phosphate from bicarbonate: step 1/1. The protein operates within pyrimidine metabolism; UMP biosynthesis via de novo pathway; (S)-dihydroorotate from bicarbonate: step 1/3. Its function is as follows. Large subunit of the glutamine-dependent carbamoyl phosphate synthetase (CPSase). CPSase catalyzes the formation of carbamoyl phosphate from the ammonia moiety of glutamine, carbonate, and phosphate donated by ATP, constituting the first step of 2 biosynthetic pathways, one leading to arginine and/or urea and the other to pyrimidine nucleotides. The large subunit (synthetase) binds the substrates ammonia (free or transferred from glutamine from the small subunit), hydrogencarbonate and ATP and carries out an ATP-coupled ligase reaction, activating hydrogencarbonate by forming carboxy phosphate which reacts with ammonia to form carbamoyl phosphate. The sequence is that of Carbamoyl phosphate synthase large chain from Methanosphaerula palustris (strain ATCC BAA-1556 / DSM 19958 / E1-9c).